A 473-amino-acid chain; its full sequence is RUN domain-containing protein 3B (473 aa).

The tract at residues 1-24 is disordered; that stretch reads MASRSLGGLSGIRGGGGGGGKKSL. Positions 8 to 21 are enriched in gly residues; it reads GLSGIRGGGGGGGK. Omega-N-methylarginine is present on Arg13. In terms of domain architecture, RUN spans 57–206; it reads DDSSPEFNNF…IDFSFCLKGE (150 aa). Ser232 and Ser233 each carry phosphoserine. A coiled-coil region spans residues 317 to 342; it reads AHKLEKEQLEYIIVELQDQLTVLKNN. Residues 399 to 422 show a composition bias toward polar residues; sequence SLSQTSLDPGQSQEGDGKQDTLNV. Positions 399–428 are disordered; the sequence is SLSQTSLDPGQSQEGDGKQDTLNVMSEGKE.

The protein belongs to the RUNDC3 family. As to quaternary structure, interacts with RAP2A. Isoform 2 is expressed at high levels in brain, thymus, ovary, testis, leukocyte, liver, small intestine and prostate. Isoform 1 is expressed in the brain, testis and adrenal gland. It is activated in tumorigenic breast cancer cell lines and in the primary tumor of breast cancer patients. Activation also correlates with metastatic lymph node invasion and can be detected in metastatic epithelial cells from the lymph nodes and in the bone marrow of patients.

The protein is RUN domain-containing protein 3B (RUNDC3B) of Homo sapiens (Human).